We begin with the raw amino-acid sequence, 81 residues long: MNVVYIADLKLPEILHTVSTDFALQKKLFQGFRATALKALAFTIYQISISIQTSYPSDYCCSCWLLDTVRCVAILYAIHLS.

This is an uncharacterized protein from Schizosaccharomyces pombe (strain 972 / ATCC 24843) (Fission yeast).